Here is a 197-residue protein sequence, read N- to C-terminus: Holliday junction branch migration complex subunit RuvA (197 aa).

The tract at residues 1–63 is domain I; the sequence is MISSLRGEVL…EDSMTLYGFV (63 aa). The tract at residues 64-139 is domain II; the sequence is DGETRDLFLT…KVGPAGSAAT (76 aa). Residues 139–143 are flexible linker; the sequence is TAPAV. The tract at residues 144–197 is domain III; the sequence is NGHTVRAPVVEALVGLGFAAKQAEEATDKVLAGDGEATTSSALRAALSLLGKAR.

This sequence belongs to the RuvA family. Homotetramer. Forms an RuvA(8)-RuvB(12)-Holliday junction (HJ) complex. HJ DNA is sandwiched between 2 RuvA tetramers; dsDNA enters through RuvA and exits via RuvB. An RuvB hexamer assembles on each DNA strand where it exits the tetramer. Each RuvB hexamer is contacted by two RuvA subunits (via domain III) on 2 adjacent RuvB subunits; this complex drives branch migration. In the full resolvosome a probable DNA-RuvA(4)-RuvB(12)-RuvC(2) complex forms which resolves the HJ.

Its subcellular location is the cytoplasm. In terms of biological role, the RuvA-RuvB-RuvC complex processes Holliday junction (HJ) DNA during genetic recombination and DNA repair, while the RuvA-RuvB complex plays an important role in the rescue of blocked DNA replication forks via replication fork reversal (RFR). RuvA specifically binds to HJ cruciform DNA, conferring on it an open structure. The RuvB hexamer acts as an ATP-dependent pump, pulling dsDNA into and through the RuvAB complex. HJ branch migration allows RuvC to scan DNA until it finds its consensus sequence, where it cleaves and resolves the cruciform DNA. This chain is Holliday junction branch migration complex subunit RuvA, found in Mycobacterium marinum (strain ATCC BAA-535 / M).